We begin with the raw amino-acid sequence, 370 residues long: Queuine tRNA-ribosyltransferase (370 aa).

Asp-89 acts as the Proton acceptor in catalysis. Substrate contacts are provided by residues 89 to 93 (DSGGF), Asp-143, Gln-185, and Gly-212. An RNA binding region spans residues 243–249 (GVGKPED). Asp-262 functions as the Nucleophile in the catalytic mechanism. Residues 267–271 (TRNAR) form an RNA binding; important for wobble base 34 recognition region. Zn(2+)-binding residues include Cys-300, Cys-302, Cys-305, and His-331.

It belongs to the queuine tRNA-ribosyltransferase family. In terms of assembly, homodimer. Within each dimer, one monomer is responsible for RNA recognition and catalysis, while the other monomer binds to the replacement base PreQ1. Zn(2+) is required as a cofactor.

The enzyme catalyses 7-aminomethyl-7-carbaguanine + guanosine(34) in tRNA = 7-aminomethyl-7-carbaguanosine(34) in tRNA + guanine. The protein operates within tRNA modification; tRNA-queuosine biosynthesis. In terms of biological role, catalyzes the base-exchange of a guanine (G) residue with the queuine precursor 7-aminomethyl-7-deazaguanine (PreQ1) at position 34 (anticodon wobble position) in tRNAs with GU(N) anticodons (tRNA-Asp, -Asn, -His and -Tyr). Catalysis occurs through a double-displacement mechanism. The nucleophile active site attacks the C1' of nucleotide 34 to detach the guanine base from the RNA, forming a covalent enzyme-RNA intermediate. The proton acceptor active site deprotonates the incoming PreQ1, allowing a nucleophilic attack on the C1' of the ribose to form the product. After dissociation, two additional enzymatic reactions on the tRNA convert PreQ1 to queuine (Q), resulting in the hypermodified nucleoside queuosine (7-(((4,5-cis-dihydroxy-2-cyclopenten-1-yl)amino)methyl)-7-deazaguanosine). The polypeptide is Queuine tRNA-ribosyltransferase (Hydrogenovibrio crunogenus (strain DSM 25203 / XCL-2) (Thiomicrospira crunogena)).